The primary structure comprises 126 residues: Fluoride-specific ion channel FluC (126 aa).

4 helical membrane passes run 4–24 (FAILGFIALGGAFGACSRYLV), 38–58 (YGTLTVNVVGSFIMGLLIAAF), 71–91 (IIGLGFLGALTTFSTFSMDNV), and 104–124 (LNVVLNVTLSITAAWVGFQLL). Na(+) contacts are provided by Gly-78 and Thr-81.

It belongs to the fluoride channel Fluc/FEX (TC 1.A.43) family.

The protein resides in the cell inner membrane. The catalysed reaction is fluoride(in) = fluoride(out). Na(+) is not transported, but it plays an essential structural role and its presence is essential for fluoride channel function. In terms of biological role, fluoride-specific ion channel. Important for reducing fluoride concentration in the cell, thus reducing its toxicity. The chain is Fluoride-specific ion channel FluC from Vibrio vulnificus (strain CMCP6).